The following is a 1043-amino-acid chain: Glutamate receptor ionotropic, NMDA 3B (1043 aa).

The N-terminal stretch at 1–22 is a signal peptide; it reads MEFVRALWLGLALALGPGSAGG. The Extracellular segment spans residues 23–574; that stretch reads HPQPCGVLAR…PIGAFMWPLH (552 aa). N-linked (GlcNAc...) asparagine glycosylation is found at Asn69, Asn344, Asn451, and Asn465. 2 disulfides stabilise this stretch: Cys439-Cys475 and Cys445-Cys476. Positions 531, 533, and 538 each coordinate glycine. Residues Ser533 and Arg538 each contribute to the D-serine site. Residues 575–594 traverse the membrane as a helical segment; that stretch reads WSTWLGVFAALHLTALFLTV. Topologically, residues 595-615 are cytoplasmic; the sequence is YEWRSPYGLTPRGRNRSTVFS. Residues 616 to 627 constitute an intramembrane region (discontinuously helical); sequence YSSALNLCYAIL. At 628-641 the chain is on the cytoplasmic side; sequence FRRTVSSKTPKCPT. Residues 642 to 661 form a helical membrane-spanning segment; sequence GRLLMNLWAIFCLLVLSSYT. Over 662 to 832 the chain is Extracellular; the sequence is ANLAAVMVGD…TLQMSIYHFA (171 aa). Ser701 provides a ligand contact to glycine. Positions 701, 702, and 745 each coordinate D-serine. Asp745 lines the glycine pocket. The N-linked (GlcNAc...) asparagine glycan is linked to Asn786. A helical transmembrane segment spans residues 833–848; sequence GLFVLLCLGLGSALLS. The Cytoplasmic segment spans residues 849–1043; it reads SLGEHAFFRL…PHSGRPGSQE (195 aa). 2 disordered regions span residues 882 to 924 and 1012 to 1043; these read ALNT…WKRA and GDSA…GSQE. An involved in the trafficking and surface expression of NMDARs region spans residues 979-1012; sequence QPGELQELERRIEVARERLRQALVRRGQLLAQLG. Residues 1024–1035 are compositionally biased toward low complexity; that stretch reads QARAAPAEAPPH.

Belongs to the glutamate-gated ion channel (TC 1.A.10.1) family. NR3B/GRIN3B subfamily. Forms heterotetrameric channels that contain at least two GluN1 subunits and at least a combination of one GluN2 and one GluN3 subunits (in vitro). Forms heterotetrameric channels composed of two GluN1/zeta subunits (GRIN1), and two identical GluN3 subunits (GRIN3A or GRIN3B) (in vitro). Does not form functional homomeric channels.

It localises to the cell membrane. It is found in the postsynaptic cell membrane. The catalysed reaction is Ca(2+)(in) = Ca(2+)(out). It carries out the reaction Na(+)(in) = Na(+)(out). Functionally, component of a non-conventional N-methyl-D-aspartate (NMDA) receptors (NMDARs) that function as heterotetrameric, ligand-gated cation channels with low calcium permeability and low voltage-dependent block by Mg(2+). Forms glutamatergic receptor complexes with GluN1 and GluN2 subunits which are activated by glycine binding to the GluN1 and GluN3 subunits and L-glutamate binding to GluN2 subunits. Forms excitatory glycinergic receptor complexes with GluN1 alone which are activated by glycine binding to the GluN1 and GluN3 subunits. GluN3B subunit also binds D-serine and, in the absence of glycine, activates glycinergic receptor complexes, but with lower efficacy than glycine. Each GluN3 subunit confers differential attributes to channel properties, including activation, deactivation and desensitization kinetics, pH sensitivity, Ca2(+) permeability, and binding to allosteric modulators. The polypeptide is Glutamate receptor ionotropic, NMDA 3B (Homo sapiens (Human)).